The sequence spans 407 residues: B3 domain-containing protein Os07g0183200 (407 aa).

Residues 124-227 constitute a DNA-binding region (TF-B3); the sequence is FVKTLMISDF…ELYVGVRRQR (104 aa).

Its subcellular location is the nucleus. The protein is B3 domain-containing protein Os07g0183200 of Oryza sativa subsp. japonica (Rice).